Consider the following 189-residue polypeptide: Rho-related protein racM (189 aa).

Position 12-19 (12-19 (GDYGVGKT)) interacts with GTP. An Effector region motif is present at residues 35 to 43 (YVPTALDNF). Residues 60–64 (DTAGG) and 118–121 (TKID) each bind GTP. C186 is subject to Cysteine methyl ester. C186 carries S-geranylgeranyl cysteine lipidation. Residues 187–189 (IIL) constitute a propeptide, removed in mature form.

Belongs to the small GTPase superfamily. Rho family.

It localises to the cell membrane. The chain is Rho-related protein racM (racM) from Dictyostelium discoideum (Social amoeba).